A 1091-amino-acid polypeptide reads, in one-letter code: E3 ubiquitin-protein ligase TRIM33 (1091 aa).

The span at 1 to 13 (MADNKGGGGGGGE) shows a compositional bias: gly residues. Residues 1–87 (MADNKGGGGG…SATPASSSSS (87 aa)) are disordered. Residues 52 to 87 (APVAAVPTDTPAEENPAPSSSSVASSSATPASSSSS) are compositionally biased toward low complexity. Residues 97–154 (CAVCKLSLQSRDTEPKLLPCLHSFCRRCLPEPERQLSVPGGTNGDIQQVGVIRCLVCR) form an RING-type 1 zinc finger. Residues 180–227 (KSEQVCTSCEDNASAVGFCVECGEWLCKTCIEAHQRVKFTKDHIITNK) form a B box-type 1; atypical zinc finger. 8 residues coordinate Zn(2+): C185, C188, C209, H213, C245, H248, C268, and H273. The B box-type 2 zinc-finger motif lies at 240–281 (QRPVFCPVHKQEQLKLFCETCDRLTCRDCQLLEHKEHRYQFL). Residues 269-361 (QLLEHKEHRY…QLESVTKERQ (93 aa)) adopt a coiled-coil conformation. Disordered stretches follow at residues 672–779 (LPQP…TPPL) and 821–844 (GKSA…GSNK). Positions 675 to 721 (PTSNMNPSPAPSAMSPGSTGLSNSHTPVRPPSTSSTGSRGSCGSSSR) are enriched in low complexity. The segment covering 754 to 763 (KQEKAEDGRR) has biased composition (basic and acidic residues). Low complexity predominate over residues 768–779 (LSSPESSLTPPL). A PHD-type zinc finger spans residues 850-897 (EDWCAVCQNGGDLLCCEKCPKVFHLTCHVPTLLSFPSGEWICTFCRDL). The Bromo domain maps to 920 to 1043 (GLSPVDQMKC…LYFEEKLPAI (124 aa)). Residues 1051-1091 (PLPEFEAEDDDGDVTDDSDDDDFVQPRRKRLKSEERPVHIK) form a disordered region. Acidic residues predominate over residues 1055 to 1073 (FEAEDDDGDVTDDSDDDDF). Positions 1082 to 1091 (KSEERPVHIK) are enriched in basic and acidic residues.

In terms of assembly, may interact with smad4.

It is found in the nucleus. It carries out the reaction S-ubiquitinyl-[E2 ubiquitin-conjugating enzyme]-L-cysteine + [acceptor protein]-L-lysine = [E2 ubiquitin-conjugating enzyme]-L-cysteine + N(6)-ubiquitinyl-[acceptor protein]-L-lysine.. Its pathway is protein modification; protein ubiquitination. Acts as an E3 ubiquitin-protein ligase for smad4. Promotes ectoderm embryonic development at the expense of other germ layers. Inhibits mesodermal differentiation. Promotes neural development of the ectoderm. Promotes smad4 alpha degradation via the ubiquitin proteasome pathway. May act as a transcriptional repressor. This is E3 ubiquitin-protein ligase TRIM33 (trim33) from Xenopus laevis (African clawed frog).